We begin with the raw amino-acid sequence, 968 residues long: RNA polymerase-associated protein RapA (968 aa).

Residues 164-334 form the Helicase ATP-binding domain; it reads DVGRRHAPRV…FARLRLLDPN (171 aa). 177-184 provides a ligand contact to ATP; sequence DEVGLGKT. The DEAH box motif lies at 280-283; the sequence is DEAH. The 173-residue stretch at 490 to 662 folds into the Helicase C-terminal domain; that stretch reads RVEWLMGYLT…YLASPDQTEG (173 aa).

This sequence belongs to the SNF2/RAD54 helicase family. RapA subfamily. Interacts with the RNAP. Has a higher affinity for the core RNAP than for the holoenzyme. Its ATPase activity is stimulated by binding to RNAP.

Its function is as follows. Transcription regulator that activates transcription by stimulating RNA polymerase (RNAP) recycling in case of stress conditions such as supercoiled DNA or high salt concentrations. Probably acts by releasing the RNAP, when it is trapped or immobilized on tightly supercoiled DNA. Does not activate transcription on linear DNA. Probably not involved in DNA repair. This chain is RNA polymerase-associated protein RapA, found in Escherichia coli (strain 55989 / EAEC).